The following is a 112-amino-acid chain: uncharacterized protein (112 aa).

Transmembrane regions (helical) follow at residues Ile-33–Phe-53 and Met-69–Val-89.

It localises to the membrane. This is an uncharacterized protein from Saccharomyces cerevisiae (strain ATCC 204508 / S288c) (Baker's yeast).